The primary structure comprises 250 residues: Triosephosphate isomerase (250 aa).

9-11 (NWK) is a substrate binding site. The Electrophile role is filled by His96. Residue Glu166 is the Proton acceptor of the active site. Residues Gly172, Ser212, and 233–234 (GG) each bind substrate.

It belongs to the triosephosphate isomerase family. In terms of assembly, homodimer.

It is found in the cytoplasm. It carries out the reaction D-glyceraldehyde 3-phosphate = dihydroxyacetone phosphate. The protein operates within carbohydrate biosynthesis; gluconeogenesis. It participates in carbohydrate degradation; glycolysis; D-glyceraldehyde 3-phosphate from glycerone phosphate: step 1/1. Its function is as follows. Involved in the gluconeogenesis. Catalyzes stereospecifically the conversion of dihydroxyacetone phosphate (DHAP) to D-glyceraldehyde-3-phosphate (G3P). In Chlorobium phaeobacteroides (strain BS1), this protein is Triosephosphate isomerase.